Consider the following 447-residue polypeptide: tRNA-2-methylthio-N(6)-dimethylallyladenosine synthase (447 aa).

One can recognise an MTTase N-terminal domain in the interval 14–130; it reads KKVYIRTFGC…LPAMIANAGQ (117 aa). 6 residues coordinate [4Fe-4S] cluster: Cys-23, Cys-59, Cys-93, Cys-166, Cys-170, and Cys-173. The Radical SAM core domain occupies 152–382; the sequence is RSGTISAFIP…IALQGSISGE (231 aa). The 63-residue stretch at 385 to 447 folds into the TRAM domain; sequence AAEVGAVVEV…TPATLIGTPA (63 aa).

Belongs to the methylthiotransferase family. MiaB subfamily. In terms of assembly, monomer. It depends on [4Fe-4S] cluster as a cofactor.

The protein resides in the cytoplasm. The enzyme catalyses N(6)-dimethylallyladenosine(37) in tRNA + (sulfur carrier)-SH + AH2 + 2 S-adenosyl-L-methionine = 2-methylsulfanyl-N(6)-dimethylallyladenosine(37) in tRNA + (sulfur carrier)-H + 5'-deoxyadenosine + L-methionine + A + S-adenosyl-L-homocysteine + 2 H(+). Functionally, catalyzes the methylthiolation of N6-(dimethylallyl)adenosine (i(6)A), leading to the formation of 2-methylthio-N6-(dimethylallyl)adenosine (ms(2)i(6)A) at position 37 in tRNAs that read codons beginning with uridine. The chain is tRNA-2-methylthio-N(6)-dimethylallyladenosine synthase from Chlorobium phaeobacteroides (strain BS1).